The primary structure comprises 574 residues: FAD-linked oxidoreductase sor8 (574 aa).

Residues 1-27 form the signal peptide; it reads MYAPPFVRAFGIAVLAVLPSFSSPATA. N-linked (GlcNAc...) asparagine glycosylation is found at Asn58, Asn112, Asn136, Asn266, Asn312, Asn363, and Asn384. In terms of domain architecture, FAD-binding PCMH-type spans 126–305; sequence VIGTYVQYAV…YSMTVKAHAN (180 aa).

Belongs to the oxygen-dependent FAD-linked oxidoreductase family. Requires FAD as cofactor.

Its pathway is secondary metabolite biosynthesis. Its function is as follows. FAD-linked oxidoreductase; part of the SOR gene cluster that mediates the biosynthesis of sorbicillinoids, a diverse group of yellow secondary metabolites that restrict growth of competing pathogenic fungi but not of bacteria. Sorbicillinoids biosynthesis requires the action of two PKSs. The SOR cluster is required for the production of trichodimerol and dihydrotrichotetronin, with sor2 being sufficient for production of trichodimerol, but not dihydrotrichotetronin in the light. Sor1 iteratively combines three acetyl units and the growing chain is modified by the ketoacyl reductase subunit, and optional by the enoyl reductase subunit in the second cycle. The polyketide is then handed over to the PKS sor2, which adds three more acetyl units, and two methyl groups. Sor2 releases an aldehyde, which undergoes spontaneous cyclization resulting in the formation of sorbicillin or 2',3'-dihydrosorbicillin. The monooxygenase sor5 oxidizes sorbicillin and 2',3'-dihydrosorbicillin to 2',3'-dihydrosorbicillinol and sorbicillinol, respectively. The oxidoreductase sor8 further converts sorbicillinol into oxosorbicillinol. Sorbicillinol is the building block for the other sorbicillinoids such as disorbicillinol, bisvertinolon, dihydrobisvertinolone, and dihydrotrichotetronine. The sequence is that of FAD-linked oxidoreductase sor8 from Hypocrea jecorina (strain QM6a) (Trichoderma reesei).